A 576-amino-acid chain; its full sequence is 2-isopropylmalate synthase (576 aa).

The region spanning 31-305 (PIWMSTDLRD…DPGLDFSHVN (275 aa)) is the Pyruvate carboxyltransferase domain. 4 residues coordinate Mg(2+): Asp-40, His-244, His-246, and Asn-280. The tract at residues 437–576 (ADGPIGYVSH…RGMAPSMELA (140 aa)) is regulatory domain.

Belongs to the alpha-IPM synthase/homocitrate synthase family. LeuA type 2 subfamily. As to quaternary structure, homodimer. Requires Mg(2+) as cofactor.

Its subcellular location is the cytoplasm. It carries out the reaction 3-methyl-2-oxobutanoate + acetyl-CoA + H2O = (2S)-2-isopropylmalate + CoA + H(+). It participates in amino-acid biosynthesis; L-leucine biosynthesis; L-leucine from 3-methyl-2-oxobutanoate: step 1/4. In terms of biological role, catalyzes the condensation of the acetyl group of acetyl-CoA with 3-methyl-2-oxobutanoate (2-ketoisovalerate) to form 3-carboxy-3-hydroxy-4-methylpentanoate (2-isopropylmalate). This chain is 2-isopropylmalate synthase, found in Ralstonia nicotianae (strain ATCC BAA-1114 / GMI1000) (Ralstonia solanacearum).